The chain runs to 451 residues: Glycylpeptide N-tetradecanoyltransferase (451 aa).

Tetradecanoyl-CoA-binding positions include 177–179 (LCI) and 185–189 (NKRLA). The active-site Proton acceptor; via carboxylate is the L451.

The protein belongs to the NMT family. In terms of assembly, monomer.

The protein resides in the cytoplasm. It carries out the reaction N-terminal glycyl-[protein] + tetradecanoyl-CoA = N-tetradecanoylglycyl-[protein] + CoA + H(+). Competitively inhibited by SC-58272, a peptidomimetic derived from the N-terminal sequence of a natural substrate. Its function is as follows. Adds a myristoyl group to the N-terminal glycine residue of certain cellular proteins. Substrate specificity requires an N-terminal glycine in the nascent polypeptide substrates. Ser is present at position 5 in almost all known N-myristoyl proteins and Lys is commonly encountered at postion 6. Basic residues are preferred at positions 7 and 8. This Candida albicans (strain SC5314 / ATCC MYA-2876) (Yeast) protein is Glycylpeptide N-tetradecanoyltransferase (NMT1).